Reading from the N-terminus, the 193-residue chain is Orotate phosphoribosyltransferase (193 aa).

114 to 122 (EDVITTGGS) contacts 5-phospho-alpha-D-ribose 1-diphosphate. The orotate site is built by Thr118 and Arg146.

It belongs to the purine/pyrimidine phosphoribosyltransferase family. PyrE subfamily. In terms of assembly, homodimer. Requires Mg(2+) as cofactor.

It catalyses the reaction orotidine 5'-phosphate + diphosphate = orotate + 5-phospho-alpha-D-ribose 1-diphosphate. It functions in the pathway pyrimidine metabolism; UMP biosynthesis via de novo pathway; UMP from orotate: step 1/2. Its function is as follows. Catalyzes the transfer of a ribosyl phosphate group from 5-phosphoribose 1-diphosphate to orotate, leading to the formation of orotidine monophosphate (OMP). This is Orotate phosphoribosyltransferase from Chlorobium phaeobacteroides (strain BS1).